Here is a 201-residue protein sequence, read N- to C-terminus: Recombination protein RecR (201 aa).

A C4-type zinc finger spans residues 57–72; the sequence is CQVCYSLSDNDICDIC. In terms of domain architecture, Toprim spans 80–177; sequence NKICIVESYP…RITRITYGIS (98 aa).

Belongs to the RecR family.

In terms of biological role, may play a role in DNA repair. It seems to be involved in an RecBC-independent recombinational process of DNA repair. It may act with RecF and RecO. This Brachyspira hyodysenteriae (strain ATCC 49526 / WA1) protein is Recombination protein RecR.